Reading from the N-terminus, the 281-residue chain is Nucleoid occlusion protein (281 aa).

A disordered region spans residues 1–24 (MKHPFSRLFSFGEKEQEEMEEKQE). The segment at residues 145 to 164 (EALAQRLGKGQSTIANKLRL) is a DNA-binding region (H-T-H motif).

The protein belongs to the ParB family.

The protein resides in the cytoplasm. It is found in the nucleoid. Functionally, effects nucleoid occlusion by binding relatively nonspecifically to DNA and preventing the assembly of the division machinery in the vicinity of the nucleoid, especially under conditions that disturb the cell cycle. It helps to coordinate cell division and chromosome segregation by preventing the formation of the Z ring through the nucleoid, which would cause chromosome breakage. This chain is Nucleoid occlusion protein, found in Geobacillus kaustophilus (strain HTA426).